We begin with the raw amino-acid sequence, 1352 residues long: Ubiquitin carboxyl-terminal hydrolase 31 (1352 aa).

Over residues 1 to 16 (MSKVTAPGSGPPAAAS) the composition is skewed to low complexity. Disordered regions lie at residues 1–62 (MSKV…RSVG) and 79–119 (SSEG…PPAC). Residues 32–43 (RAGGGGAGGPGA) are compositionally biased toward gly residues. Low complexity predominate over residues 44 to 62 (SGPAAPSSPSSPSSARSVG). Residues 95–117 (PPGPAAAPTPPPCPPPPASPAPP) are compositionally biased toward pro residues. The USP domain maps to 128–765 (AGLRNHGNTC…TAYILFYQRR (638 aa)). Cys-137 (nucleophile) is an active-site residue. Residues 162 to 185 (RAGRPEPSPDPEQPAGRGAQGQGE) form a disordered region. His-723 serves as the catalytic Proton acceptor. Disordered stretches follow at residues 812–835 (LASLSESVEMTGERSEDDGGFSTR), 919–939 (SSSYQEPSDSHSRREHKAVGR), and 951–1352 (DESD…QKPQ). Residues 958–970 (LNSSVVDTQSKHS) show a composition bias toward polar residues. 4 stretches are compositionally biased toward low complexity: residues 992–1001 (VDQSDSVDSS), 1051–1070 (SSLSSTSPSSPLPVKVSLKP), 1078–1089 (DSSSRGSGRHSS), and 1101–1138 (PKSQDSVSSPSPQKQKSASALTYTASSTSAKKASGPAT). Residues 1148 to 1159 (RTSDHSLSREGS) are compositionally biased toward basic and acidic residues. Residues 1160–1181 (RQSLGSDRASATSTSKPNSPRV) are compositionally biased toward polar residues. The span at 1198–1210 (SSSMASLRSPSTS) shows a compositional bias: low complexity. 2 stretches are compositionally biased toward basic and acidic residues: residues 1215 to 1225 (LKRDSKSEDKG) and 1234 to 1243 (RQKETRRSTD). Residues 1251–1264 (SKKAGGSSVKSVCK) show a composition bias toward low complexity. The residue at position 1264 (Lys-1264) is an N6-acetyllysine. Polar residues-rich tracts occupy residues 1278-1290 (PASQQPNANTTGK) and 1341-1352 (MQTSARPSQKPQ).

It belongs to the peptidase C19 family. Acetylated at Lys-1264. Acetylation decreases activity. Deacetylated by SIRT1. Widely expressed.

It catalyses the reaction Thiol-dependent hydrolysis of ester, thioester, amide, peptide and isopeptide bonds formed by the C-terminal Gly of ubiquitin (a 76-residue protein attached to proteins as an intracellular targeting signal).. Deubiquitinase that recognizes and hydrolyzes the peptide bond at the C-terminal Gly of ubiquitin. May play a role in the regulation of NF-kappa-B signaling pathway by deubiquitinating TRAF2. In terms of biological role, (Microbial infection) Plays a positive role in foot-and-mouth disease and classical swine fever viral infection. Mechanistically, associates with internal ribosomal entry site (IRES) element within the 5'-untranslated region of viral genomes to promote translation of the virus-encoded polyprotein. In Homo sapiens (Human), this protein is Ubiquitin carboxyl-terminal hydrolase 31 (USP31).